Here is a 338-residue protein sequence, read N- to C-terminus: RNA 3'-terminal phosphate cyclase (338 aa).

ATP contacts are provided by residues glutamine 103 and 283–287 (YLADQ). Histidine 308 serves as the catalytic Tele-AMP-histidine intermediate.

The protein belongs to the RNA 3'-terminal cyclase family. Type 1 subfamily.

It localises to the cytoplasm. It catalyses the reaction a 3'-end 3'-phospho-ribonucleotide-RNA + ATP = a 3'-end 2',3'-cyclophospho-ribonucleotide-RNA + AMP + diphosphate. Catalyzes the conversion of 3'-phosphate to a 2',3'-cyclic phosphodiester at the end of RNA. The mechanism of action of the enzyme occurs in 3 steps: (A) adenylation of the enzyme by ATP; (B) transfer of adenylate to an RNA-N3'P to produce RNA-N3'PP5'A; (C) and attack of the adjacent 2'-hydroxyl on the 3'-phosphorus in the diester linkage to produce the cyclic end product. The biological role of this enzyme is unknown but it is likely to function in some aspects of cellular RNA processing. This Escherichia coli O45:K1 (strain S88 / ExPEC) protein is RNA 3'-terminal phosphate cyclase.